Consider the following 472-residue polypeptide: MSPHENPSVETRTESDTFGPIEVPAHRYWGAQTQRSIQNFKIGTERQPAPLVHALGIVKQAAALVNKDLGGLDPKIADAIAESAAEVVAGKHDDEFPLVVWQTGSGTQSNMNANEVIASLANERLGGKRGGKSPVHPNDHCNRGQSSNDTFPTAMHIAVAREVQERLLPALSHLHTALDAKAKEFESIVKIGRTHLQDATPVSLGQEFSGYAAQVALGGARIAATLPGVLALAQGGTAVGTGLNAHPEFAERFAAKVAELTGLPFTSAENKFEALATHDALVFLQGALTALASGLFKIANDIRLLGSGPRSGLGELSLPENEPGSSIMPGKVNPTQCEALTMVCAQVVGNGTTVSFAGSQGHFELNVFKPVIANAVLQSVRILADASVSFTDNCVVGIKANTDRISDLMSRSLMLVTALAPSIGYDKAAEIAKTAHKNGTTLKEEALRLGYVTDEEFERVVRPETMLAPSAE.

A disordered region spans residues 1–20 (MSPHENPSVETRTESDTFGP). Residues 105–107 (SGT), 136–139 (HPND), 146–148 (SSN), and threonine 194 contribute to the substrate site. The disordered stretch occupies residues 127 to 149 (GKRGGKSPVHPNDHCNRGQSSND). The Proton donor/acceptor role is filled by histidine 195. Serine 325 is a catalytic residue. Residues serine 326 and 331-333 (KVN) each bind substrate.

This sequence belongs to the class-II fumarase/aspartase family. Fumarase subfamily. In terms of assembly, homotetramer.

It is found in the cytoplasm. The catalysed reaction is (S)-malate = fumarate + H2O. It functions in the pathway carbohydrate metabolism; tricarboxylic acid cycle; (S)-malate from fumarate: step 1/1. Its function is as follows. Involved in the TCA cycle. Catalyzes the stereospecific interconversion of fumarate to L-malate. The protein is Fumarate hydratase class II of Methylorubrum extorquens (strain ATCC 14718 / DSM 1338 / JCM 2805 / NCIMB 9133 / AM1) (Methylobacterium extorquens).